The following is a 107-amino-acid chain: Acidic phospholipase A2 braziliase-I (107 aa).

7 disulfide bridges follow: C26–C100, C28–C44, C43–C86, C49–C107, C50–C79, C57–C72, and C66–C77. Residues Y27, G29, and G31 each contribute to the Ca(2+) site. H47 is a catalytic residue. D48 contributes to the Ca(2+) binding site. The active site involves D80.

In terms of assembly, monomer. Ca(2+) serves as cofactor. As to expression, expressed by the venom gland.

It is found in the secreted. It catalyses the reaction a 1,2-diacyl-sn-glycero-3-phosphocholine + H2O = a 1-acyl-sn-glycero-3-phosphocholine + a fatty acid + H(+). Functionally, snake venom phospholipase A2 (PLA2) that induces significant edematogenic activity. Shows mild cytotoxicity on Trypanosoma cruzi and Leishmania infantum. Also inhibits ADP- and collagen-induced platelet aggregation. Does not show myotoxic activity. The polypeptide is Acidic phospholipase A2 braziliase-I (Bothrops brazili (Brazil's lancehead)).